Reading from the N-terminus, the 160-residue chain is Sperm acrosome-associated protein 5 (160 aa).

Positions 1–21 (MKVCSIVVVILAVLLIAKLDA) are cleaved as a signal peptide. In terms of domain architecture, C-type lysozyme spans 22–150 (KIYERCELAK…SEWLKGCSVR (129 aa)). 4 cysteine pairs are disulfide-bonded: C27-C147, C51-C135, C85-C100, and C96-C114. E56 is an active-site residue.

This sequence belongs to the glycosyl hydrolase 22 family.

It is found in the secreted. The catalysed reaction is Hydrolysis of (1-&gt;4)-beta-linkages between N-acetylmuramic acid and N-acetyl-D-glucosamine residues in a peptidoglycan and between N-acetyl-D-glucosamine residues in chitodextrins.. The protein is Sperm acrosome-associated protein 5 (Spaca5) of Mus musculus (Mouse).